Consider the following 104-residue polypeptide: Large ribosomal subunit protein bL21 (104 aa).

This sequence belongs to the bacterial ribosomal protein bL21 family. In terms of assembly, part of the 50S ribosomal subunit. Contacts protein L20.

Functionally, this protein binds to 23S rRNA in the presence of protein L20. The chain is Large ribosomal subunit protein bL21 from Streptococcus sanguinis (strain SK36).